The chain runs to 440 residues: T-box transcription factor TBX20 (440 aa).

The T-box DNA-binding region spans 103-282 (LWDKFHDLGT…SNPFAKGFRD (180 aa)).

Its subcellular location is the nucleus. Transcriptional regulator that may be involved in heart developmental processes. In Xenopus tropicalis (Western clawed frog), this protein is T-box transcription factor TBX20 (tbx20).